The chain runs to 249 residues: Syntaxin-10 (249 aa).

Serine 2 is modified (N-acetylserine). The Cytoplasmic portion of the chain corresponds to 2–228; sequence SLEDPFFVVR…VSHMTSDRRQ (227 aa). Residues 41–69 adopt a coiled-coil conformation; it reads EELDWTTNELRNGLRSIEWDLEDLEETIG. Serine 108 is subject to Phosphoserine. At threonine 110 the chain carries Phosphothreonine. Phosphoserine occurs at positions 134, 140, and 143. Positions 157 to 219 constitute a t-SNARE coiled-coil homology domain; that stretch reads QLIMDEQDQQ…DGVLRKLAKV (63 aa). The chain crosses the membrane as a helical; Anchor for type IV membrane protein span at residues 229-249; the sequence is WCAIAVLVGVLLLVLILLFSL.

The protein belongs to the syntaxin family. Interacts with VPS52. As to expression, expressed at high levels in heart, skeletal muscle and pancreas.

The protein resides in the golgi apparatus membrane. In terms of biological role, SNARE involved in vesicular transport from the late endosomes to the trans-Golgi network. This chain is Syntaxin-10 (STX10), found in Homo sapiens (Human).